Here is a 267-residue protein sequence, read N- to C-terminus: AMP/ADP-polyphosphate phosphotransferase (267 aa).

This sequence belongs to the polyphosphate kinase 2 (PPK2) family. Class III subfamily. Mn(2+) serves as cofactor.

It carries out the reaction [phosphate](n) + ADP = [phosphate](n+1) + AMP. It catalyses the reaction [phosphate](n) + ATP = [phosphate](n+1) + ADP. In terms of biological role, uses inorganic polyphosphate (polyP) as a donor to convert both AMP to ADP and ADP to ATP. Can also use GMP, CMP, UMP, GDP, CDP and UDP. This Meiothermus ruber (strain ATCC 35948 / DSM 1279 / VKM B-1258 / 21) (Thermus ruber) protein is AMP/ADP-polyphosphate phosphotransferase.